A 251-amino-acid chain; its full sequence is Hydroxyacylglutathione hydrolase (251 aa).

Zn(2+) contacts are provided by H53, H55, D57, H58, H110, D127, and H165.

It belongs to the metallo-beta-lactamase superfamily. Glyoxalase II family. In terms of assembly, monomer. The cofactor is Zn(2+).

The catalysed reaction is an S-(2-hydroxyacyl)glutathione + H2O = a 2-hydroxy carboxylate + glutathione + H(+). It functions in the pathway secondary metabolite metabolism; methylglyoxal degradation; (R)-lactate from methylglyoxal: step 2/2. Thiolesterase that catalyzes the hydrolysis of S-D-lactoyl-glutathione to form glutathione and D-lactic acid. The sequence is that of Hydroxyacylglutathione hydrolase from Enterobacter sp. (strain 638).